The following is a 516-amino-acid chain: uncharacterized protein (516 aa).

2 PFTB repeats span residues 45–86 (RQDA…QRAD) and 401–443 (DERA…DGSE).

This is an uncharacterized protein from Bradyrhizobium diazoefficiens (strain JCM 10833 / BCRC 13528 / IAM 13628 / NBRC 14792 / USDA 110).